A 707-amino-acid polypeptide reads, in one-letter code: Elongation factor G (707 aa).

Residues 9 to 293 (HDVRNIGIMA…GVVDYLPSPE (285 aa)) enclose the tr-type G domain. GTP-binding positions include 18-25 (AHIDAGKT), 90-94 (DTPGH), and 144-147 (NKMD).

Belongs to the TRAFAC class translation factor GTPase superfamily. Classic translation factor GTPase family. EF-G/EF-2 subfamily.

Its subcellular location is the cytoplasm. Catalyzes the GTP-dependent ribosomal translocation step during translation elongation. During this step, the ribosome changes from the pre-translocational (PRE) to the post-translocational (POST) state as the newly formed A-site-bound peptidyl-tRNA and P-site-bound deacylated tRNA move to the P and E sites, respectively. Catalyzes the coordinated movement of the two tRNA molecules, the mRNA and conformational changes in the ribosome. The protein is Elongation factor G of Bifidobacterium longum (strain DJO10A).